The following is a 326-amino-acid chain: Probable cell division protein WhiA (326 aa).

The segment at residues 275–308 is a DNA-binding region (H-T-H motif); the sequence is SLDELGHHADPPMTKDAVAGRIRRLLAMADKKAV.

It belongs to the WhiA family.

In terms of biological role, involved in cell division and chromosome segregation. The protein is Probable cell division protein WhiA of Clavibacter sepedonicus (Clavibacter michiganensis subsp. sepedonicus).